The following is a 412-amino-acid chain: Argininosuccinate synthase (412 aa).

Residue A8 to S16 participates in ATP binding. Position 87 (Y87) interacts with L-citrulline. G117 contacts ATP. Positions 119, 123, and 124 each coordinate L-aspartate. Residue N123 participates in L-citrulline binding. The L-citrulline site is built by R127, S175, E259, and Y271.

Belongs to the argininosuccinate synthase family. Type 1 subfamily. As to quaternary structure, homotetramer.

It is found in the cytoplasm. The catalysed reaction is L-citrulline + L-aspartate + ATP = 2-(N(omega)-L-arginino)succinate + AMP + diphosphate + H(+). The protein operates within amino-acid biosynthesis; L-arginine biosynthesis; L-arginine from L-ornithine and carbamoyl phosphate: step 2/3. The chain is Argininosuccinate synthase from Clavibacter michiganensis subsp. michiganensis (strain NCPPB 382).